A 198-amino-acid polypeptide reads, in one-letter code: 3-isopropylmalate dehydratase small subunit (198 aa).

This sequence belongs to the LeuD family. LeuD type 1 subfamily. Heterodimer of LeuC and LeuD.

It catalyses the reaction (2R,3S)-3-isopropylmalate = (2S)-2-isopropylmalate. The protein operates within amino-acid biosynthesis; L-leucine biosynthesis; L-leucine from 3-methyl-2-oxobutanoate: step 2/4. Catalyzes the isomerization between 2-isopropylmalate and 3-isopropylmalate, via the formation of 2-isopropylmaleate. This chain is 3-isopropylmalate dehydratase small subunit, found in Mycobacterium leprae (strain Br4923).